We begin with the raw amino-acid sequence, 444 residues long: UDP-N-acetylmuramate--L-alanine ligase (444 aa).

Residue glycine 111–serine 117 coordinates ATP.

This sequence belongs to the MurCDEF family.

It localises to the cytoplasm. The enzyme catalyses UDP-N-acetyl-alpha-D-muramate + L-alanine + ATP = UDP-N-acetyl-alpha-D-muramoyl-L-alanine + ADP + phosphate + H(+). It functions in the pathway cell wall biogenesis; peptidoglycan biosynthesis. Its function is as follows. Cell wall formation. This Leuconostoc mesenteroides subsp. mesenteroides (strain ATCC 8293 / DSM 20343 / BCRC 11652 / CCM 1803 / JCM 6124 / NCDO 523 / NBRC 100496 / NCIMB 8023 / NCTC 12954 / NRRL B-1118 / 37Y) protein is UDP-N-acetylmuramate--L-alanine ligase.